A 379-amino-acid polypeptide reads, in one-letter code: Tetraacyldisaccharide 4'-kinase (379 aa).

63 to 70 contributes to the ATP binding site; the sequence is AVGGAGKT.

This sequence belongs to the LpxK family.

It carries out the reaction a lipid A disaccharide + ATP = a lipid IVA + ADP + H(+). Its pathway is glycolipid biosynthesis; lipid IV(A) biosynthesis; lipid IV(A) from (3R)-3-hydroxytetradecanoyl-[acyl-carrier-protein] and UDP-N-acetyl-alpha-D-glucosamine: step 6/6. Functionally, transfers the gamma-phosphate of ATP to the 4'-position of a tetraacyldisaccharide 1-phosphate intermediate (termed DS-1-P) to form tetraacyldisaccharide 1,4'-bis-phosphate (lipid IVA). The protein is Tetraacyldisaccharide 4'-kinase of Anaeromyxobacter dehalogenans (strain 2CP-1 / ATCC BAA-258).